The sequence spans 441 residues: Glutamyl-tRNA reductase (441 aa).

Substrate-binding positions include 47–50 (TCNR), Ser104, 109–111 (EAQ), and Gln115. Cys48 functions as the Nucleophile in the catalytic mechanism. 184–189 (GAGEMG) is a binding site for NADP(+).

The protein belongs to the glutamyl-tRNA reductase family. As to quaternary structure, homodimer.

The catalysed reaction is (S)-4-amino-5-oxopentanoate + tRNA(Glu) + NADP(+) = L-glutamyl-tRNA(Glu) + NADPH + H(+). It participates in porphyrin-containing compound metabolism; protoporphyrin-IX biosynthesis; 5-aminolevulinate from L-glutamyl-tRNA(Glu): step 1/2. Catalyzes the NADPH-dependent reduction of glutamyl-tRNA(Glu) to glutamate 1-semialdehyde (GSA). This Myxococcus xanthus (strain DK1622) protein is Glutamyl-tRNA reductase.